Reading from the N-terminus, the 66-residue chain is Alpha-like toxin BeM9 (66 aa).

Positions 2–66 constitute an LCN-type CS-alpha/beta domain; the sequence is RDAYIAKPHN…VPIRIPGKCH (65 aa). 4 disulfide bridges follow: Cys-12/Cys-65, Cys-16/Cys-38, Cys-24/Cys-48, and Cys-28/Cys-50.

The protein belongs to the long (4 C-C) scorpion toxin superfamily. Sodium channel inhibitor family. Alpha subfamily. As to expression, expressed by the venom gland.

Its subcellular location is the secreted. Functionally, alpha toxins bind voltage-independently at site-3 of sodium channels (Nav) and inhibit the inactivation of the activated channels, thereby blocking neuronal transmission. This toxin is active on both mammals and insects, since it inhibits inactivation of rNav1.4/SCN4A, hNav1.5/SCN5A, mNav1.6/SCN8A and insect BgNav1 and DmNav1 channels. In vivo, it shows paralytic activity in mice. This is Alpha-like toxin BeM9 from Mesobuthus eupeus (Lesser Asian scorpion).